A 105-amino-acid chain; its full sequence is Integration host factor subunit alpha (105 aa).

It belongs to the bacterial histone-like protein family. As to quaternary structure, heterodimer of an alpha and a beta chain.

This protein is one of the two subunits of integration host factor, a specific DNA-binding protein that functions in genetic recombination as well as in transcriptional and translational control. In Rhodospirillum rubrum (strain ATCC 11170 / ATH 1.1.1 / DSM 467 / LMG 4362 / NCIMB 8255 / S1), this protein is Integration host factor subunit alpha.